The primary structure comprises 308 residues: 4-hydroxy-3-methylbut-2-enyl diphosphate reductase (308 aa).

[4Fe-4S] cluster is bound at residue cysteine 13. Residues histidine 42 and histidine 75 each coordinate (2E)-4-hydroxy-3-methylbut-2-enyl diphosphate. 2 residues coordinate dimethylallyl diphosphate: histidine 42 and histidine 75. 2 residues coordinate isopentenyl diphosphate: histidine 42 and histidine 75. Residue cysteine 97 coordinates [4Fe-4S] cluster. Residue histidine 125 participates in (2E)-4-hydroxy-3-methylbut-2-enyl diphosphate binding. A dimethylallyl diphosphate-binding site is contributed by histidine 125. Residue histidine 125 coordinates isopentenyl diphosphate. Glutamate 127 functions as the Proton donor in the catalytic mechanism. Threonine 165 contacts (2E)-4-hydroxy-3-methylbut-2-enyl diphosphate. Cysteine 195 provides a ligand contact to [4Fe-4S] cluster. The (2E)-4-hydroxy-3-methylbut-2-enyl diphosphate site is built by serine 223, serine 224, asparagine 225, and serine 267. Dimethylallyl diphosphate-binding residues include serine 223, serine 224, asparagine 225, and serine 267. The isopentenyl diphosphate site is built by serine 223, serine 224, asparagine 225, and serine 267.

This sequence belongs to the IspH family. Requires [4Fe-4S] cluster as cofactor.

The catalysed reaction is isopentenyl diphosphate + 2 oxidized [2Fe-2S]-[ferredoxin] + H2O = (2E)-4-hydroxy-3-methylbut-2-enyl diphosphate + 2 reduced [2Fe-2S]-[ferredoxin] + 2 H(+). It carries out the reaction dimethylallyl diphosphate + 2 oxidized [2Fe-2S]-[ferredoxin] + H2O = (2E)-4-hydroxy-3-methylbut-2-enyl diphosphate + 2 reduced [2Fe-2S]-[ferredoxin] + 2 H(+). It participates in isoprenoid biosynthesis; dimethylallyl diphosphate biosynthesis; dimethylallyl diphosphate from (2E)-4-hydroxy-3-methylbutenyl diphosphate: step 1/1. It functions in the pathway isoprenoid biosynthesis; isopentenyl diphosphate biosynthesis via DXP pathway; isopentenyl diphosphate from 1-deoxy-D-xylulose 5-phosphate: step 6/6. In terms of biological role, catalyzes the conversion of 1-hydroxy-2-methyl-2-(E)-butenyl 4-diphosphate (HMBPP) into a mixture of isopentenyl diphosphate (IPP) and dimethylallyl diphosphate (DMAPP). Acts in the terminal step of the DOXP/MEP pathway for isoprenoid precursor biosynthesis. This Chlamydia muridarum (strain MoPn / Nigg) protein is 4-hydroxy-3-methylbut-2-enyl diphosphate reductase.